The chain runs to 122 residues: Large ribosomal subunit protein uL18 (122 aa).

Belongs to the universal ribosomal protein uL18 family. Part of the 50S ribosomal subunit; part of the 5S rRNA/L5/L18/L25 subcomplex. Contacts the 5S and 23S rRNAs.

In terms of biological role, this is one of the proteins that bind and probably mediate the attachment of the 5S RNA into the large ribosomal subunit, where it forms part of the central protuberance. In Trichlorobacter lovleyi (strain ATCC BAA-1151 / DSM 17278 / SZ) (Geobacter lovleyi), this protein is Large ribosomal subunit protein uL18.